The chain runs to 445 residues: Exodeoxyribonuclease 7 large subunit (445 aa).

This sequence belongs to the XseA family. In terms of assembly, heterooligomer composed of large and small subunits.

The protein resides in the cytoplasm. The catalysed reaction is Exonucleolytic cleavage in either 5'- to 3'- or 3'- to 5'-direction to yield nucleoside 5'-phosphates.. In terms of biological role, bidirectionally degrades single-stranded DNA into large acid-insoluble oligonucleotides, which are then degraded further into small acid-soluble oligonucleotides. The sequence is that of Exodeoxyribonuclease 7 large subunit from Staphylococcus haemolyticus (strain JCSC1435).